The sequence spans 297 residues: PAK4-inhibitor INKA2 (297 aa).

3 disordered regions span residues 82-109 (GRGPARPTVCSPSSQPSLGSSTKFPSHR), 175-200 (LEKGGEKGETGGAREPKGEKGQPQEL), and 234-285 (TPMV…LEHS). Residues 92–102 (SPSSQPSLGSS) are compositionally biased toward low complexity. The tract at residues 137-180 (EPDDWTSTLMSRGRNRQPLVLGDNVFADLVGNWLDLPELEKGGE) is inka box. Over residues 244 to 253 (RSQKVKKRSL) the composition is skewed to basic residues.

Belongs to the INKA family. In terms of assembly, interacts with PAK4.

It is found in the nucleus. Its function is as follows. Inhibitor of the serine/threonine-protein kinase PAK4. Acts by binding PAK4 in a substrate-like manner, inhibiting the protein kinase activity. In Homo sapiens (Human), this protein is PAK4-inhibitor INKA2.